The primary structure comprises 324 residues: tRNA U34 carboxymethyltransferase (324 aa).

Carboxy-S-adenosyl-L-methionine is bound by residues Lys-92, Trp-106, Lys-111, Gly-131, 153 to 155 (DPT), 182 to 183 (IE), Met-197, Tyr-201, and Arg-316.

It belongs to the class I-like SAM-binding methyltransferase superfamily. CmoB family. Homotetramer.

It catalyses the reaction carboxy-S-adenosyl-L-methionine + 5-hydroxyuridine(34) in tRNA = 5-carboxymethoxyuridine(34) in tRNA + S-adenosyl-L-homocysteine + H(+). Its function is as follows. Catalyzes carboxymethyl transfer from carboxy-S-adenosyl-L-methionine (Cx-SAM) to 5-hydroxyuridine (ho5U) to form 5-carboxymethoxyuridine (cmo5U) at position 34 in tRNAs. In Proteus mirabilis (strain HI4320), this protein is tRNA U34 carboxymethyltransferase.